The following is a 430-amino-acid chain: Phosphomethylpyrimidine synthase (430 aa).

Substrate-binding positions include Asn67, Met96, Tyr125, His161, 183–185 (SRG), 224–227 (DALR), and Glu263. His267 is a binding site for Zn(2+). Tyr290 contributes to the substrate binding site. Residue His331 participates in Zn(2+) binding. [4Fe-4S] cluster is bound by residues Cys406, Cys409, and Cys413.

Belongs to the ThiC family. Homodimer. [4Fe-4S] cluster is required as a cofactor.

It carries out the reaction 5-amino-1-(5-phospho-beta-D-ribosyl)imidazole + S-adenosyl-L-methionine = 4-amino-2-methyl-5-(phosphooxymethyl)pyrimidine + CO + 5'-deoxyadenosine + formate + L-methionine + 3 H(+). It functions in the pathway cofactor biosynthesis; thiamine diphosphate biosynthesis. In terms of biological role, catalyzes the synthesis of the hydroxymethylpyrimidine phosphate (HMP-P) moiety of thiamine from aminoimidazole ribotide (AIR) in a radical S-adenosyl-L-methionine (SAM)-dependent reaction. This chain is Phosphomethylpyrimidine synthase, found in Campylobacter jejuni subsp. jejuni serotype O:23/36 (strain 81-176).